The following is a 465-amino-acid chain: Opioid growth factor receptor-like protein 1 (465 aa).

Disordered stretches follow at residues 1-89 and 309-465; these read MGNL…GNAK and ENFI…TSSG. Basic and acidic residues-rich tracts occupy residues 48–59, 316–325, 363–396, and 426–440; these read REQPEQPPERAG, PKKEQPERSK, TVEE…RNSE, and SEKD…KDSE. Positions 442 to 465 are enriched in polar residues; the sequence is PENTSCHAEVVSQQNVTNPQTSSG.

The protein belongs to the opioid growth factor receptor family.

The polypeptide is Opioid growth factor receptor-like protein 1 (Ogfrl1) (Rattus norvegicus (Rat)).